A 418-amino-acid polypeptide reads, in one-letter code: STAM-binding protein-like A (418 aa).

The disordered stretch occupies residues 199-218; that stretch reads PDVHGPPQASLSPQTPPAGA. The 132-residue stretch at 251-382 folds into the MPN domain; sequence LFVPAELCQR…LTDYGMDDVG (132 aa). Zn(2+) is bound by residues H329, H331, D342, H344, C384, H390, and H392. Residues 329–342 carry the JAMM motif motif; it reads HTHPTQTAFLSSVD.

Belongs to the peptidase M67C family. Requires Zn(2+) as cofactor.

Its function is as follows. Zinc metalloprotease that specifically cleaves 'Lys-63'-linked polyubiquitin chains. Does not cleave 'Lys-48'-linked polyubiquitin chains. Functions at the endosome and is able to oppose the ubiquitin-dependent sorting of receptors to lysosomes. This Danio rerio (Zebrafish) protein is STAM-binding protein-like A (stambpa).